The following is a 448-amino-acid chain: Metacaspase-1 (448 aa).

Residues 1-129 (MFPGQGRHTY…GHYSRPPTDS (129 aa)) form a disordered region. Residues 10–44 (YGGQQSNYSNQQQGYDQGYNQGYGQAYGQEYNQGY) show a composition bias toward low complexity. A compositionally biased stretch (pro residues) spans 61–70 (SGPPPGPPPG). A compositionally biased stretch (polar residues) spans 99 to 114 (YGNNQTRGSGNEQNYG). Residues His-231 and Cys-292 contribute to the active site.

It belongs to the peptidase C14B family.

Functionally, involved in cell death (apoptosis). The protein is Metacaspase-1 (MCA1) of Candida albicans (strain SC5314 / ATCC MYA-2876) (Yeast).